The sequence spans 561 residues: Acylcarnitine hydrolase (561 aa).

An N-terminal signal peptide occupies residues 1-26 (MTRNQLHNWLNAGFFGLLLLLIHVQG). Cys-97 and Cys-125 are oxidised to a cystine. The active-site Acyl-ester intermediate is Ser-230. Cysteines 282 and 293 form a disulfide. Residues Glu-347 and His-459 each act as charge relay system in the active site. Residues 558-561 (HREL) carry the Prevents secretion from ER motif.

Belongs to the type-B carboxylesterase/lipase family. Detected in liver (at protein level).

It localises to the microsome. The protein localises to the endoplasmic reticulum. It carries out the reaction an O-acyl-(R)-carnitine + H2O = (R)-carnitine + a fatty acid + H(+). The enzyme catalyses all-trans-retinyl hexadecanoate + H2O = all-trans-retinol + hexadecanoate + H(+). In terms of biological role, hydrolase with high activity towards palmitoylcarnitine. Is also active with p-nitrophenylacetate and alpha-naphthylacetate. May also hydrolyze retinyl esters. This is Acylcarnitine hydrolase from Mus musculus (Mouse).